Reading from the N-terminus, the 423-residue chain is Gamma-glutamyl phosphate reductase (423 aa).

This sequence belongs to the gamma-glutamyl phosphate reductase family.

It localises to the cytoplasm. It catalyses the reaction L-glutamate 5-semialdehyde + phosphate + NADP(+) = L-glutamyl 5-phosphate + NADPH + H(+). It participates in amino-acid biosynthesis; L-proline biosynthesis; L-glutamate 5-semialdehyde from L-glutamate: step 2/2. Catalyzes the NADPH-dependent reduction of L-glutamate 5-phosphate into L-glutamate 5-semialdehyde and phosphate. The product spontaneously undergoes cyclization to form 1-pyrroline-5-carboxylate. This chain is Gamma-glutamyl phosphate reductase, found in Burkholderia pseudomallei (strain 1710b).